The primary structure comprises 67 residues: Probable Sec-independent protein translocase protein TatE (67 aa).

A helical membrane pass occupies residues 1 to 21; sequence MGEISITKLLVVAALVVLLFG. The interval 45–67 is disordered; that stretch reads DEDAGAKKDANGDLPAEKLTHKE.

The protein belongs to the TatA/E family. TatE subfamily.

The protein resides in the cell inner membrane. In terms of biological role, part of the twin-arginine translocation (Tat) system that transports large folded proteins containing a characteristic twin-arginine motif in their signal peptide across membranes. TatE shares overlapping functions with TatA. The sequence is that of Probable Sec-independent protein translocase protein TatE from Escherichia fergusonii (strain ATCC 35469 / DSM 13698 / CCUG 18766 / IAM 14443 / JCM 21226 / LMG 7866 / NBRC 102419 / NCTC 12128 / CDC 0568-73).